The primary structure comprises 483 residues: Phosphomethylpyrimidine synthase (483 aa).

Residues asparagine 97, methionine 126, tyrosine 156, histidine 192, 212–214, 253–256, and glutamate 292 each bind substrate; these read SRG and DSLR. Position 296 (histidine 296) interacts with Zn(2+). Tyrosine 319 lines the substrate pocket. Histidine 360 serves as a coordination point for Zn(2+). Positions 440, 443, and 448 each coordinate [4Fe-4S] cluster.

The protein belongs to the ThiC family. [4Fe-4S] cluster serves as cofactor.

The catalysed reaction is 5-amino-1-(5-phospho-beta-D-ribosyl)imidazole + S-adenosyl-L-methionine = 4-amino-2-methyl-5-(phosphooxymethyl)pyrimidine + CO + 5'-deoxyadenosine + formate + L-methionine + 3 H(+). It functions in the pathway cofactor biosynthesis; thiamine diphosphate biosynthesis. Functionally, catalyzes the synthesis of the hydroxymethylpyrimidine phosphate (HMP-P) moiety of thiamine from aminoimidazole ribotide (AIR) in a radical S-adenosyl-L-methionine (SAM)-dependent reaction. In Parasynechococcus marenigrum (strain WH8102), this protein is Phosphomethylpyrimidine synthase.